A 284-amino-acid polypeptide reads, in one-letter code: L-ribulose-5-phosphate 3-epimerase UlaE (284 aa).

This sequence belongs to the L-ribulose-5-phosphate 3-epimerase family.

It catalyses the reaction L-ribulose 5-phosphate = L-xylulose 5-phosphate. The protein operates within cofactor degradation; L-ascorbate degradation; D-xylulose 5-phosphate from L-ascorbate: step 3/4. In terms of biological role, catalyzes the isomerization of L-xylulose-5-phosphate to L-ribulose-5-phosphate. Is involved in the anaerobic L-ascorbate utilization. The polypeptide is L-ribulose-5-phosphate 3-epimerase UlaE (Escherichia coli O157:H7 (strain EC4115 / EHEC)).